Here is a 545-residue protein sequence, read N- to C-terminus: ATP synthase subunit alpha (545 aa).

Residue 172-179 (GDRKTGKT) coordinates ATP.

The protein belongs to the ATPase alpha/beta chains family. In terms of assembly, F-type ATPases have 2 components, CF(1) - the catalytic core - and CF(0) - the membrane proton channel. CF(1) has five subunits: alpha(3), beta(3), gamma(1), delta(1), epsilon(1). CF(0) has three main subunits: a(1), b(2) and c(9-12). The alpha and beta chains form an alternating ring which encloses part of the gamma chain. CF(1) is attached to CF(0) by a central stalk formed by the gamma and epsilon chains, while a peripheral stalk is formed by the delta and b chains.

It localises to the cell membrane. It carries out the reaction ATP + H2O + 4 H(+)(in) = ADP + phosphate + 5 H(+)(out). Functionally, produces ATP from ADP in the presence of a proton gradient across the membrane. The alpha chain is a regulatory subunit. This chain is ATP synthase subunit alpha, found in Corynebacterium urealyticum (strain ATCC 43042 / DSM 7109).